A 120-amino-acid polypeptide reads, in one-letter code: Spermidine export protein MdtJ (120 aa).

4 helical membrane-spanning segments follow: residues 1–21 (MFYWILLALAIAAEITGTLSM), 31–51 (TGFILMLVMITLSYIFLSFAV), 54–74 (IALGVAYALWEGIGILFITLF), and 81–101 (EALSAMKIAGLVTLVFGIALI).

It belongs to the drug/metabolite transporter (DMT) superfamily. Small multidrug resistance (SMR) (TC 2.A.7.1) family. MdtJ subfamily. As to quaternary structure, forms a complex with MdtI.

It is found in the cell inner membrane. Functionally, catalyzes the excretion of spermidine. This Citrobacter koseri (strain ATCC BAA-895 / CDC 4225-83 / SGSC4696) protein is Spermidine export protein MdtJ.